The following is a 123-amino-acid chain: Large ribosomal subunit protein uL29 (123 aa).

This sequence belongs to the universal ribosomal protein uL29 family.

The sequence is that of Large ribosomal subunit protein uL29 (RPL35) from Euphorbia esula (Leafy spurge).